Reading from the N-terminus, the 777-residue chain is Proton-coupled zinc antiporter SLC30A5 (777 aa).

The Cytoplasmic segment spans residues 1–28 (MEEKYSSNVMSSGRLGPVDAPESRLTRY). A helical transmembrane segment spans residues 29-49 (IVLLCFTKFLKALGIFESYDL). The Lumenal segment spans residues 50-52 (LKV). The helical transmembrane segment at 53 to 73 (VHIVQFIFILKLGSTCFMVLF) threads the bilayer. At 74-94 (QKPFSSGKSITKRQWVSIVKH) the chain is on the cytoplasmic side. Residues 95–115 (AFVSCIISLLWFFGLTLCGPL) traverse the membrane as a helical segment. The Lumenal portion of the chain corresponds to 116–117 (RT). Residues 118–138 (LLLFEHSDIVVISLLTVLFTG) form a helical membrane-spanning segment. At 139–148 (SGGGPSKTRG) the chain is on the cytoplasmic side. A helical membrane pass occupies residues 149-169 (AAFFIIAVICLLLFDNDDLMA). Over 170–189 (KIAEHPEGHHDSALTHFLYR) the chain is Lumenal. The helical transmembrane segment at 190–210 (AFFLLGVADHKGGVLLLVLAL) threads the bilayer. Over 211-234 (CFNVGFHTASRKLSLDIGGAKRLQ) the chain is Cytoplasmic. A helical membrane pass occupies residues 235–255 (ALSHLVSVIILSPWVIILSAT). Residues 256-263 (TESKIESW) are Lumenal-facing. Residues 264–284 (SALIMPFMTVIFSVMIMDFYV) form a helical membrane-spanning segment. Over 285–299 (ESVCSVKMEPSKCAR) the chain is Cytoplasmic. Residues 300–320 (YGSFLIFASALLLGNFWTHPI) traverse the membrane as a helical segment. At 321 to 338 (TDQLRAMNKPAHQLHTEH) the chain is on the lumenal side. A helical transmembrane segment spans residues 339–359 (VLSGGVVVSAIFFILSAQILA). The Cytoplasmic segment spans residues 360 to 414 (SSSRKGQRGTLVGYSPEGTPLYNFMGDALHNTSPSMPRFLKDSLKQILEEYDSRQ). Residues 415-435 (IFYFLCLNLAFTFVEIFYGVW) form a helical membrane-spanning segment. Residues 436-444 (TNSLGLLSD) lie on the Lumenal side of the membrane. The helical transmembrane segment at 445–465 (GFHMLFDCSALVMGLIAALMT) threads the bilayer. Residues histidine 447 and aspartate 451 each coordinate Zn(2+). Residues 466-484 (RWKATRIFSYGYGRVEILS) are Cytoplasmic-facing. The helical transmembrane segment at 485–505 (GFINGLFLVVIAFFVFIEAVA) threads the bilayer. The Lumenal portion of the chain corresponds to 506-516 (RIYDPPDINTD). The chain crosses the membrane as a helical span at residues 517–537 (MLTPVSVGGLIVNLVGICAFS). The interval 538–586 (HAHSHGAARGGCPSHDHGHSHHGHGHSHGHNHGHSHSDHGHNHGHTHNH) is his-rich loop; required for zinc transport. The Cytoplasmic portion of the chain corresponds to 538-604 (HAHSHGAARG…VGMNANMRGV (67 aa)). The disordered stretch occupies residues 547-593 (GGCPSHDHGHSHHGHGHSHGHNHGHSHSDHGHNHGHTHNHGHSHGSA). 2 stretches are compositionally biased toward basic residues: residues 555 to 571 (GHSH…NHGH) and 579 to 589 (NHGHTHNHGHS). Residues 605–625 (FSHVLADTLGSVGVIVSTILI) traverse the membrane as a helical segment. The Zn(2+) site is built by histidine 607 and aspartate 611. The Lumenal segment spans residues 626–629 (RQFG). A helical transmembrane segment spans residues 630 to 650 (WLIADPLCSLFIAVLIFGSVL). The Cytoplasmic portion of the chain corresponds to 651-777 (PLLKDACQVI…KYYKDGTYIM (127 aa)).

It belongs to the cation diffusion facilitator (CDF) transporter (TC 2.A.4) family. SLC30A subfamily. In terms of assembly, heterodimer with SLC30A6/ZNT6; form a functional zinc ion transmembrane transporter.

The protein localises to the golgi apparatus. The protein resides in the golgi stack membrane. It localises to the cytoplasmic vesicle. Its subcellular location is the COPII-coated vesicle membrane. It is found in the secretory vesicle membrane. The protein localises to the trans-Golgi network membrane. The catalysed reaction is Zn(2+)(in) + 2 H(+)(out) = Zn(2+)(out) + 2 H(+)(in). Together with SLC30A6 forms a functional proton-coupled zinc ion antiporter mediating zinc entry into the lumen of organelles along the secretory pathway. By contributing to zinc ion homeostasis within the early secretory pathway, regulates the activation and folding of enzymes like alkaline phosphatases and enzymes involved in phosphatidylinositol glycan anchor biosynthesis. This chain is Proton-coupled zinc antiporter SLC30A5 (slc30a5), found in Xenopus tropicalis (Western clawed frog).